A 164-amino-acid polypeptide reads, in one-letter code: Protein-export protein SecB (164 aa).

The protein belongs to the SecB family. As to quaternary structure, homotetramer, a dimer of dimers. One homotetramer interacts with 1 SecA dimer.

Its subcellular location is the cytoplasm. In terms of biological role, one of the proteins required for the normal export of preproteins out of the cell cytoplasm. It is a molecular chaperone that binds to a subset of precursor proteins, maintaining them in a translocation-competent state. It also specifically binds to its receptor SecA. The chain is Protein-export protein SecB from Rhodopseudomonas palustris (strain BisB18).